Consider the following 303-residue polypeptide: Glycine--tRNA ligase alpha subunit (303 aa).

This sequence belongs to the class-II aminoacyl-tRNA synthetase family. Tetramer of two alpha and two beta subunits.

Its subcellular location is the cytoplasm. The enzyme catalyses tRNA(Gly) + glycine + ATP = glycyl-tRNA(Gly) + AMP + diphosphate. The chain is Glycine--tRNA ligase alpha subunit from Syntrophomonas wolfei subsp. wolfei (strain DSM 2245B / Goettingen).